The sequence spans 410 residues: Platelet-activating factor acetylhydrolase IB subunit alpha (410 aa).

The interval 1–38 is required for self-association and interaction with PAFAH1B2 and PAFAH1B3; it reads MVLSQRQRDELNRAIADYLRSNGYEEAYSVFKKEAELD. Residues 1–66 form an interaction with NDE1 region; sequence MVLSQRQRDE…SVIRLQKKVM (66 aa). An interaction with NDEL1 region spans residues 1–102; it reads MVLSQRQRDE…EWIPRPPEKY (102 aa). In terms of domain architecture, LisH spans 7-39; that stretch reads QRDELNRAIADYLRSNGYEEAYSVFKKEAELDM. An N6-acetyllysine modification is found at Lys53. Residues 56–82 adopt a coiled-coil conformation; sequence TSVIRLQKKVMELESKLNEAKEEFTSG. The tract at residues 83-410 is interaction with dynein and dynactin; the sequence is GPLGQKRDPK…DQTVKVWECR (328 aa). WD repeat units follow at residues 106 to 147, 148 to 187, 190 to 229, 232 to 271, 274 to 333, 336 to 377, and 378 to 410; these read GHRS…RTLK, GHTD…CIRT, GHDH…CVKT, GHRE…CKAE, EHEH…CLMT, GHDN…KTLN, and AHEH…WECR. The residue at position 109 (Ser109) is a Phosphoserine. The segment at 367–409 is interaction with DCX; the sequence is YKNKRCMKTLNAHEHFVTSLDFHKTAPYVVTGSVDQTVKVWEC. The interval 388-410 is interaction with NDEL1; the sequence is FHKTAPYVVTGSVDQTVKVWECR.

It belongs to the WD repeat LIS1/nudF family. In terms of assembly, can self-associate. Component of the cytosolic PAF-AH (I) heterotetrameric enzyme, which is composed of PAFAH1B1 (beta), PAFAH1B2 (alpha2) and PAFAH1B3 (alpha1) subunits. The catalytic activity of the enzyme resides in the alpha1 (PAFAH1B3) and alpha2 (PAFAH1B2) subunits, whereas the beta subunit (PAFAH1B1) has regulatory activity. Trimer formation is not essential for the catalytic activity. Interacts with the catalytic dimer of PAF-AH (I) heterotetrameric enzyme: interacts with PAFAH1B2 homodimer (alpha2/alpha2 homodimer), PAFAH1B3 homodimer (alpha1/alpha1 homodimer) and PAFAH1B2-PAFAH1B3 heterodimer (alpha2/alpha1 heterodimer). Interacts with DCX, dynein, dynactin, IQGAP1, KATNB1, NDE1, NDEL1, NUDC and RSN. Interacts with DISC1, and this interaction is enhanced by NDEL1. Interacts with DAB1 when DAB1 is phosphorylated in response to RELN/reelin signaling. Interacts with INTS13. Interacts with DCDC1.

It localises to the cytoplasm. The protein localises to the cytoskeleton. Its subcellular location is the microtubule organizing center. The protein resides in the centrosome. It is found in the spindle. It localises to the nucleus membrane. In terms of biological role, regulatory subunit (beta subunit) of the cytosolic type I platelet-activating factor (PAF) acetylhydrolase (PAF-AH (I)), an enzyme that catalyzes the hydrolyze of the acetyl group at the sn-2 position of PAF and its analogs and participates in PAF inactivation. Regulates the PAF-AH (I) activity in a catalytic dimer composition-dependent manner. Positively regulates the activity of the minus-end directed microtubule motor protein dynein. May enhance dynein-mediated microtubule sliding by targeting dynein to the microtubule plus end. Required for several dynein- and microtubule-dependent processes such as the maintenance of Golgi integrity, the peripheral transport of microtubule fragments and the coupling of the nucleus and centrosome. Required during brain development for the proliferation of neuronal precursors and the migration of newly formed neurons from the ventricular/subventricular zone toward the cortical plate. Neuronal migration involves a process called nucleokinesis, whereby migrating cells extend an anterior process into which the nucleus subsequently translocates. During nucleokinesis dynein at the nuclear surface may translocate the nucleus towards the centrosome by exerting force on centrosomal microtubules. Also required for proper activation of Rho GTPases and actin polymerization at the leading edge of locomoting cerebellar neurons and postmigratory hippocampal neurons in response to calcium influx triggered via NMDA receptors. May also play a role in other forms of cell locomotion including the migration of fibroblasts during wound healing. Required for dynein recruitment to microtubule plus ends and BICD2-bound cargos. May modulate the Reelin pathway through interaction of the PAF-AH (I) catalytic dimer with VLDLR. The sequence is that of Platelet-activating factor acetylhydrolase IB subunit alpha from Macaca fascicularis (Crab-eating macaque).